The sequence spans 327 residues: Biotin synthase (327 aa).

Positions 49–282 constitute a Radical SAM core domain; it reads FNKEKIDLCS…NKVIRLCGGR (234 aa). Residues Cys-67, Cys-71, and Cys-74 each contribute to the [4Fe-4S] cluster site. Ser-110, Cys-142, Cys-201, and Arg-277 together coordinate [2Fe-2S] cluster.

It belongs to the radical SAM superfamily. Biotin synthase family. In terms of assembly, homodimer. The cofactor is [4Fe-4S] cluster. Requires [2Fe-2S] cluster as cofactor.

The enzyme catalyses (4R,5S)-dethiobiotin + (sulfur carrier)-SH + 2 reduced [2Fe-2S]-[ferredoxin] + 2 S-adenosyl-L-methionine = (sulfur carrier)-H + biotin + 2 5'-deoxyadenosine + 2 L-methionine + 2 oxidized [2Fe-2S]-[ferredoxin]. It participates in cofactor biosynthesis; biotin biosynthesis; biotin from 7,8-diaminononanoate: step 2/2. In terms of biological role, catalyzes the conversion of dethiobiotin (DTB) to biotin by the insertion of a sulfur atom into dethiobiotin via a radical-based mechanism. The sequence is that of Biotin synthase from Methanococcus maripaludis (strain DSM 14266 / JCM 13030 / NBRC 101832 / S2 / LL).